Consider the following 801-residue polypeptide: uncharacterized protein (801 aa).

Positions 1 to 93 constitute a PE domain; the sequence is MSWVMVSPEL…GGAYAAAEAA (93 aa).

The protein belongs to the mycobacterial PE family. PGRS subfamily.

This is an uncharacterized protein from Mycobacterium tuberculosis (strain ATCC 25618 / H37Rv).